We begin with the raw amino-acid sequence, 248 residues long: DNA/RNA-binding protein ALBA1 (248 aa).

The segment at 217 to 248 is disordered; that stretch reads GRDGGYRGGNRGGSRSGFRGGRGGFRGGRALS. A compositionally biased stretch (gly residues) spans 222 to 248; the sequence is YRGGNRGGSRSGFRGGRGGFRGGRALS.

The protein belongs to the histone-like Alba family. As to quaternary structure, may form homodimers. Identified in a TARE6-associated complex consisting of over 30 proteins and including ALBA1, ALBA2 and ALBA4; the complex binds to the non-coding subtelomeric repeat region TARE6.

It is found in the nucleus. Its subcellular location is the chromosome. The protein localises to the telomere. It localises to the cytoplasm. Possesses DNA- and RNA-binding activities. During the asexual blood stages binds to a sub-population of mature mRNAs and regulates the timing of their translation. Binds to DNA with relaxed sequence specificity. Associates with the subtelomeric TARE6 repeats. This is DNA/RNA-binding protein ALBA1 from Plasmodium falciparum (isolate 3D7).